A 300-amino-acid polypeptide reads, in one-letter code: tRNA-cytidine(32) 2-sulfurtransferase (300 aa).

The short motif at Ser-57–Ser-62 is the PP-loop motif element. [4Fe-4S] cluster contacts are provided by Cys-132, Cys-135, and Cys-223.

The protein belongs to the TtcA family. As to quaternary structure, homodimer. Mg(2+) is required as a cofactor. [4Fe-4S] cluster serves as cofactor.

The protein resides in the cytoplasm. It carries out the reaction cytidine(32) in tRNA + S-sulfanyl-L-cysteinyl-[cysteine desulfurase] + AH2 + ATP = 2-thiocytidine(32) in tRNA + L-cysteinyl-[cysteine desulfurase] + A + AMP + diphosphate + H(+). The protein operates within tRNA modification. In terms of biological role, catalyzes the ATP-dependent 2-thiolation of cytidine in position 32 of tRNA, to form 2-thiocytidine (s(2)C32). The sulfur atoms are provided by the cysteine/cysteine desulfurase (IscS) system. This Xanthomonas campestris pv. campestris (strain 8004) protein is tRNA-cytidine(32) 2-sulfurtransferase.